A 209-amino-acid polypeptide reads, in one-letter code: Superoxide dismutase [Mn/Fe] (209 aa).

Fe(3+)-binding residues include histidine 38, histidine 90, aspartate 172, and histidine 176. Residues histidine 38, histidine 90, aspartate 172, and histidine 176 each contribute to the Mn(2+) site.

Belongs to the iron/manganese superoxide dismutase family. Mn(2+) serves as cofactor. Requires Fe(3+) as cofactor.

The catalysed reaction is 2 superoxide + 2 H(+) = H2O2 + O2. Destroys superoxide anion radicals which are normally produced within the cells and which are toxic to biological systems. Catalyzes the dismutation of superoxide anion radicals into O2 and H2O2 by successive reduction and oxidation of the transition metal ion at the active site. The chain is Superoxide dismutase [Mn/Fe] (sodB) from Rickettsia bellii (strain RML369-C).